The primary structure comprises 546 residues: Glucose-6-phosphate isomerase (546 aa).

Catalysis depends on Glu-352, which acts as the Proton donor. Residues His-383 and Lys-511 contribute to the active site.

Belongs to the GPI family.

Its subcellular location is the cytoplasm. The catalysed reaction is alpha-D-glucose 6-phosphate = beta-D-fructose 6-phosphate. Its pathway is carbohydrate biosynthesis; gluconeogenesis. It functions in the pathway carbohydrate degradation; glycolysis; D-glyceraldehyde 3-phosphate and glycerone phosphate from D-glucose: step 2/4. Functionally, catalyzes the reversible isomerization of glucose-6-phosphate to fructose-6-phosphate. The polypeptide is Glucose-6-phosphate isomerase (Paramagnetospirillum magneticum (strain ATCC 700264 / AMB-1) (Magnetospirillum magneticum)).